Consider the following 361-residue polypeptide: DNA replication and repair protein RecF (361 aa).

30–37 is a binding site for ATP; sequence GPNGSGKT.

This sequence belongs to the RecF family.

The protein resides in the cytoplasm. In terms of biological role, the RecF protein is involved in DNA metabolism; it is required for DNA replication and normal SOS inducibility. RecF binds preferentially to single-stranded, linear DNA. It also seems to bind ATP. This Erwinia tasmaniensis (strain DSM 17950 / CFBP 7177 / CIP 109463 / NCPPB 4357 / Et1/99) protein is DNA replication and repair protein RecF.